We begin with the raw amino-acid sequence, 252 residues long: Undecaprenyl-diphosphatase (252 aa).

7 helical membrane passes run 1–21, 42–62, 74–94, 95–115, 172–192, 206–226, and 232–252; these read MTTL…FLPI, HKAF…FLYF, ILIA…IIKS, LFNP…LILI, AAEF…FYDV, NLIV…KWLL, and HSFI…YLWY.

The protein belongs to the UppP family.

Its subcellular location is the cell inner membrane. The catalysed reaction is di-trans,octa-cis-undecaprenyl diphosphate + H2O = di-trans,octa-cis-undecaprenyl phosphate + phosphate + H(+). Functionally, catalyzes the dephosphorylation of undecaprenyl diphosphate (UPP). Confers resistance to bacitracin. The sequence is that of Undecaprenyl-diphosphatase from Sulfurihydrogenibium sp. (strain YO3AOP1).